Reading from the N-terminus, the 201-residue chain is MSSILRLDRLRQFIGELATLLDSRPDESTLLAQAHPLLAELVHQDDWLPEDCARPDPQRYQQYLLHVDSRQRFSVVSFVWGPGQITPVHDHRVWGLIGMLRGAEYSQPYAFDAGGRPHPSGARRRLEPGEVEALSPRIGDVHQVSNAFSDRTSISIHVYGANIGAVRRAVFSAEGEEKPFISGYSNSRLPNIWDLSKENPA.

Fe cation is bound by residues His-89, His-91, and His-142.

This sequence belongs to the cysteine dioxygenase family. As to quaternary structure, forms homodimer in the crystal; however, there is no evidence that the dimer exists under physiological conditions or has biological significance. Fe(2+) serves as cofactor.

It carries out the reaction 3-sulfanylpropanoate + O2 = 3-sulfinopropanoate + H(+). In terms of biological role, thiol dioxygenase that catalyzes the dioxygenation of 3-mercaptopropionate (3-MPA) to 3-sulfinopropionate (3-SPA). To a lesser extent (40-fold lower efficiency), is also able to oxidize cysteine to cysteine sulfinate (CSA). Cannot use N-acetyl-L-cysteine, homocysteine, and cysteamine as substrates. The physiological role of this enzyme is unclear. This Pseudomonas aeruginosa (strain ATCC 15692 / DSM 22644 / CIP 104116 / JCM 14847 / LMG 12228 / 1C / PRS 101 / PAO1) protein is 3-mercaptopropionate dioxygenase.